Consider the following 287-residue polypeptide: Cell wall protein PIR5 (287 aa).

The signal sequence occupies residues 1-21 (MHYKKAFLASLLSSIALTAYA). Positions 22 to 62 (PPEPWATLTPSSKMDGGTTEYRTSFGLAVIPFTVTESKVKR) are excised as a propeptide. PIR1/2/3 repeat units follow at residues 62-80 (RNVI…TQKL), 81-99 (PHPV…TQKV), 104-122 (SHIV…TAKN), and 144-162 (ATAV…ISSA).

Belongs to the PIR protein family. Covalently linked to beta-1,3-glucan of the inner cell wall layer via an alkali-sensitive ester linkage between the gamma-carboxyl group of glutamic acids, arising from specific glutamines within the PIR1/2/3 repeats, and hydroxyl groups of glucoses of beta-1,3-glucan chains.

The protein localises to the secreted. The protein resides in the cell wall. Functionally, component of the outer cell wall layer. May be involved in meiosis and sporulation. In Saccharomyces cerevisiae (strain YJM789) (Baker's yeast), this protein is Cell wall protein PIR5 (PIR5).